Reading from the N-terminus, the 309-residue chain is Ferrochelatase (309 aa).

Fe cation-binding residues include histidine 185 and glutamate 262.

The protein belongs to the ferrochelatase family.

Its subcellular location is the cytoplasm. It carries out the reaction heme b + 2 H(+) = protoporphyrin IX + Fe(2+). Its pathway is porphyrin-containing compound metabolism; protoheme biosynthesis; protoheme from protoporphyrin-IX: step 1/1. Functionally, catalyzes the ferrous insertion into protoporphyrin IX. This is Ferrochelatase from Campylobacter jejuni subsp. jejuni serotype O:23/36 (strain 81-176).